The following is a 185-amino-acid chain: Putative manganese efflux pump MntP (185 aa).

6 helical membrane passes run 4-24, 40-60, 64-84, 108-128, 134-154, and 165-185; these read LFIGELVSLSIMAFALGTDAF, IFHIGVVIGLFHVMMPLAGMA, LLSGFLGMLAVYIGGSLLFIL, LLLFAIGVSLDSFSVGLSLGM, FLAVTLFGVFSTVLTWAGLLA, and YSEALGGAILIGFGLKLLLPV.

It belongs to the MntP (TC 9.B.29) family.

It is found in the cell membrane. In terms of biological role, probably functions as a manganese efflux pump. The protein is Putative manganese efflux pump MntP of Bacillus velezensis (strain DSM 23117 / BGSC 10A6 / LMG 26770 / FZB42) (Bacillus amyloliquefaciens subsp. plantarum).